Consider the following 51-residue polypeptide: Large ribosomal subunit protein bL33 (51 aa).

The tract at residues 1–21 (MRDKIKLESSAGTGHFYTTTK) is disordered. The span at 10–20 (SAGTGHFYTTT) shows a compositional bias: polar residues.

It belongs to the bacterial ribosomal protein bL33 family.

The protein is Large ribosomal subunit protein bL33 (rpmG) of Neisseria meningitidis serogroup A / serotype 4A (strain DSM 15465 / Z2491).